We begin with the raw amino-acid sequence, 830 residues long: DNA helicase MCM8 (830 aa).

An MCM domain is found at 392 to 599 (LLKLIVNSLC…QHDHLLSEHV (208 aa)). 444 to 451 (GDPGLGKS) contacts ATP. Residue Ser-620 is modified to Phosphoserine.

This sequence belongs to the MCM family. Component of the MCM8-MCM9 complex, which forms a hexamer composed of MCM8 and MCM9. Interacts with the DNA mismatch repair (MMR) complex composed at least of MSH2, MSH3, MSH6, PMS1 and MLH1. Interacts with RAD51; the interaction recruits RAD51 to DNA damage sites. Interacts with the MRN complex composed of MRE11, RAD50 and NBN/NBS1. Interacts with CDC6 and ORC2. Interacts with HROB; the interaction recruits the MCM8-MCM9 complex to DNA damage sites.

It is found in the nucleus. The protein resides in the chromosome. It catalyses the reaction ATP + H2O = ADP + phosphate + H(+). In terms of biological role, component of the MCM8-MCM9 complex, a complex involved in the repair of double-stranded DNA breaks (DBSs) and DNA interstrand cross-links (ICLs) by homologous recombination (HR). Required for DNA resection by the MRE11-RAD50-NBN/NBS1 (MRN) complex by recruiting the MRN complex to the repair site and by promoting the complex nuclease activity. Probably by regulating the localization of the MNR complex, indirectly regulates the recruitment of downstream effector RAD51 to DNA damage sites including DBSs and ICLs. The MCM8-MCM9 complex is dispensable for DNA replication and S phase progression. However, may play a non-essential for DNA replication: may be involved in the activation of the prereplicative complex (pre-RC) during G(1) phase by recruiting CDC6 to the origin recognition complex (ORC). Probably by regulating HR, plays a key role during gametogenesis. Stabilizes MCM9 protein. The protein is DNA helicase MCM8 (Mcm8) of Rattus norvegicus (Rat).